Here is a 374-residue protein sequence, read N- to C-terminus: CMP-N-acetylneuraminate-beta-1,4-galactoside alpha-2,3-sialyltransferase (374 aa).

The Cytoplasmic portion of the chain corresponds to 1–8 (MGLLVFVR). The helical; Signal-anchor for type II membrane protein transmembrane segment at 9–28 (NLLLALCLFLVLGFLYYSAW) threads the bilayer. At 29 to 374 (KLHLLQWEDS…RVITDLSSGI (346 aa)) the chain is on the lumenal side. Residues N79 and N170 are each glycosylated (N-linked (GlcNAc...) asparagine). The cysteines at positions 159 and 313 are disulfide-linked.

The protein belongs to the glycosyltransferase 29 family. Found in all tissues tested. High expression found in brain, liver, kidney, colon, heart and spleen.

Its subcellular location is the membrane. The protein localises to the golgi apparatus. The protein resides in the golgi stack membrane. It carries out the reaction a beta-D-galactosyl-(1-&gt;4)-N-acetyl-beta-D-glucosaminyl derivative + CMP-N-acetyl-beta-neuraminate = an N-acetyl-alpha-neuraminyl-(2-&gt;3)-beta-D-galactosyl-(1-&gt;4)-N-acetyl-beta-D-glucosaminyl derivative + CMP + H(+). It participates in protein modification; protein glycosylation. Its function is as follows. Catalyzes the formation of the NeuAc-alpha-2,3-Gal-beta-1,4-GlcNAc-, NeuAc-alpha-2,3-Gal-beta-1,3-GlcNAc- and NeuAc-alpha-2,3-Gal-beta-1,3-GalNAc- sequences found in terminal carbohydrate groups of glycoproteins and glycolipids. The highest activity is toward Gal-beta-1,3-GlcNAc and the lowest toward Gal-beta-1,3-GalNAc. This is CMP-N-acetylneuraminate-beta-1,4-galactoside alpha-2,3-sialyltransferase (St3gal3) from Mus musculus (Mouse).